The following is a 730-amino-acid chain: Wall-associated receptor kinase-like 3 (730 aa).

A signal peptide spans 1 to 25 (MKTKTYNFRYIVASVLTLLMNGSSA). Topologically, residues 26 to 357 (ATPPNSNSSS…AKLAHVLRGV (332 aa)) are extracellular. N-linked (GlcNAc...) asparagine glycosylation is found at N32, N38, N68, N90, N119, N132, N212, N233, and N269. The interval 283–340 (CLCRYGYFSRMSYRSCYCGSGYRGNPYIRGGCIDIDECEVPNKCGEDTCVNMAGRYSC) is atypical EGF-like. Disulfide bonds link C285–C298, C320–C331, and C326–C340. Residues 358-378 (LIGLLGLLFFVIGIFGLYKFI) form a helical membrane-spanning segment. Residues 379 to 730 (RKRRRIIRSM…LMEINRIYDS (352 aa)) are Cytoplasmic-facing. The Protein kinase domain occupies 428–699 (FSIDRVLGQG…REVSIKLERI (272 aa)). ATP is bound by residues 434–442 (LGQGGQGTV) and K456. The active-site Proton acceptor is D553. The disordered stretch occupies residues 703-730 (PKDLDVHTENEEEEEEDQLMEINRIYDS). A compositionally biased stretch (acidic residues) spans 712–721 (NEEEEEEDQL).

It belongs to the protein kinase superfamily. Ser/Thr protein kinase family. Preferentially expressed in roots and flowers.

The protein localises to the membrane. It carries out the reaction L-seryl-[protein] + ATP = O-phospho-L-seryl-[protein] + ADP + H(+). The catalysed reaction is L-threonyl-[protein] + ATP = O-phospho-L-threonyl-[protein] + ADP + H(+). In terms of biological role, serine/threonine-protein kinase that may function as a signaling receptor of extracellular matrix component. The chain is Wall-associated receptor kinase-like 3 (WAKL3) from Arabidopsis thaliana (Mouse-ear cress).